Here is a 632-residue protein sequence, read N- to C-terminus: MAU2 chromatid cohesion factor homolog (632 aa).

2 TPR repeats span residues 453 to 486 (GGFY…ANAE) and 493 to 526 (SCSL…ASKI).

This sequence belongs to the SCC4/mau-2 family. As to quaternary structure, interacts with Nipped-B to form the cohesin loading complex.

It is found in the nucleus. Its subcellular location is the nucleoplasm. Required for association of the cohesin complex with chromatin during interphase. Plays a role in sister chromatid cohesion and normal progression through prometaphase. This chain is MAU2 chromatid cohesion factor homolog, found in Drosophila melanogaster (Fruit fly).